Consider the following 404-residue polypeptide: Probable tRNA sulfurtransferase (404 aa).

Residues 60 to 165 (HEVAESLKEI…DEAAYISYEN (106 aa)) enclose the THUMP domain. ATP-binding positions include 183–184 (ML), 208–209 (HF), arginine 265, glycine 287, and glutamine 296.

Belongs to the ThiI family.

It localises to the cytoplasm. It catalyses the reaction [ThiI sulfur-carrier protein]-S-sulfanyl-L-cysteine + a uridine in tRNA + 2 reduced [2Fe-2S]-[ferredoxin] + ATP + H(+) = [ThiI sulfur-carrier protein]-L-cysteine + a 4-thiouridine in tRNA + 2 oxidized [2Fe-2S]-[ferredoxin] + AMP + diphosphate. The catalysed reaction is [ThiS sulfur-carrier protein]-C-terminal Gly-Gly-AMP + S-sulfanyl-L-cysteinyl-[cysteine desulfurase] + AH2 = [ThiS sulfur-carrier protein]-C-terminal-Gly-aminoethanethioate + L-cysteinyl-[cysteine desulfurase] + A + AMP + 2 H(+). It participates in cofactor biosynthesis; thiamine diphosphate biosynthesis. In terms of biological role, catalyzes the ATP-dependent transfer of a sulfur to tRNA to produce 4-thiouridine in position 8 of tRNAs, which functions as a near-UV photosensor. Also catalyzes the transfer of sulfur to the sulfur carrier protein ThiS, forming ThiS-thiocarboxylate. This is a step in the synthesis of thiazole, in the thiamine biosynthesis pathway. The sulfur is donated as persulfide by IscS. This chain is Probable tRNA sulfurtransferase, found in Streptococcus agalactiae serotype Ia (strain ATCC 27591 / A909 / CDC SS700).